A 99-amino-acid chain; its full sequence is Acylphosphatase-2 (99 aa).

Serine 2 is modified (N-acetylserine). The Acylphosphatase-like domain occupies 9-99 (SVDYEVFGRV…LEYSNFSIRY (91 aa)). Residues arginine 24 and asparagine 42 contribute to the active site. Phosphoserine is present on serine 93.

It belongs to the acylphosphatase family.

The enzyme catalyses an acyl phosphate + H2O = a carboxylate + phosphate + H(+). In terms of biological role, its physiological role is not yet clear. The protein is Acylphosphatase-2 (ACYP2) of Homo sapiens (Human).